The chain runs to 190 residues: MAKSIVLYGGQFNPIHIAHMVVASEVNAFIKPDVFYFIPSFISPLKEHTDYLEGRYRVDMIQSVIDDLGFGRICLNEIERRGQSYTYDTVMYILDKHPDAKLYLVIGTDQYNQLHKWFKINELKSYITFVIVNRDKTTQEVESEMLSITIPRIDISSTLIRKRVKNKENIQALVSPSVEQYIREEGLYES.

The protein belongs to the NadD family.

The enzyme catalyses nicotinate beta-D-ribonucleotide + ATP + H(+) = deamido-NAD(+) + diphosphate. The protein operates within cofactor biosynthesis; NAD(+) biosynthesis; deamido-NAD(+) from nicotinate D-ribonucleotide: step 1/1. Functionally, catalyzes the reversible adenylation of nicotinate mononucleotide (NaMN) to nicotinic acid adenine dinucleotide (NaAD). This chain is Probable nicotinate-nucleotide adenylyltransferase, found in Staphylococcus saprophyticus subsp. saprophyticus (strain ATCC 15305 / DSM 20229 / NCIMB 8711 / NCTC 7292 / S-41).